Reading from the N-terminus, the 454-residue chain is tRNA modification GTPase MnmE (454 aa).

(6S)-5-formyl-5,6,7,8-tetrahydrofolate contacts are provided by Arg23, Glu80, and Lys120. The region spanning 216–377 (TIKIVIAGPP…LKNKILEITT (162 aa)) is the TrmE-type G domain. Position 226 (Asn226) interacts with K(+). GTP contacts are provided by residues 226–231 (NVGKSS), 245–251 (TNIPGTT), and 270–273 (DTAG). Ser230 contributes to the Mg(2+) binding site. K(+) is bound by residues Thr245, Ile247, and Thr250. Thr251 contributes to the Mg(2+) binding site. Residue Lys454 coordinates (6S)-5-formyl-5,6,7,8-tetrahydrofolate.

It belongs to the TRAFAC class TrmE-Era-EngA-EngB-Septin-like GTPase superfamily. TrmE GTPase family. In terms of assembly, homodimer. Heterotetramer of two MnmE and two MnmG subunits. K(+) is required as a cofactor.

The protein resides in the cytoplasm. Its function is as follows. Exhibits a very high intrinsic GTPase hydrolysis rate. Involved in the addition of a carboxymethylaminomethyl (cmnm) group at the wobble position (U34) of certain tRNAs, forming tRNA-cmnm(5)s(2)U34. In Buchnera aphidicola subsp. Cinara cedri (strain Cc), this protein is tRNA modification GTPase MnmE.